Reading from the N-terminus, the 459-residue chain is Argininosuccinate lyase (459 aa).

The protein belongs to the lyase 1 family. Argininosuccinate lyase subfamily.

Its subcellular location is the cytoplasm. It catalyses the reaction 2-(N(omega)-L-arginino)succinate = fumarate + L-arginine. Its pathway is amino-acid biosynthesis; L-arginine biosynthesis; L-arginine from L-ornithine and carbamoyl phosphate: step 3/3. The polypeptide is Argininosuccinate lyase (Geobacillus thermodenitrificans (strain NG80-2)).